The primary structure comprises 231 residues: Endonuclease NucS (231 aa).

It belongs to the NucS endonuclease family.

It is found in the cytoplasm. Its function is as follows. Cleaves both 3' and 5' ssDNA extremities of branched DNA structures. In Pseudarthrobacter chlorophenolicus (strain ATCC 700700 / DSM 12829 / CIP 107037 / JCM 12360 / KCTC 9906 / NCIMB 13794 / A6) (Arthrobacter chlorophenolicus), this protein is Endonuclease NucS.